The primary structure comprises 375 residues: Coproporphyrin III ferrochelatase (375 aa).

Residues serine 59 and tyrosine 128 each contribute to the Fe-coproporphyrin III site. 2 residues coordinate Fe(2+): histidine 191 and glutamate 286.

Belongs to the ferrochelatase family.

The protein resides in the cytoplasm. It catalyses the reaction Fe-coproporphyrin III + 2 H(+) = coproporphyrin III + Fe(2+). It functions in the pathway porphyrin-containing compound metabolism; protoheme biosynthesis. Its function is as follows. Involved in coproporphyrin-dependent heme b biosynthesis. Catalyzes the insertion of ferrous iron into coproporphyrin III to form Fe-coproporphyrin III. The chain is Coproporphyrin III ferrochelatase from Streptomyces griseus subsp. griseus (strain JCM 4626 / CBS 651.72 / NBRC 13350 / KCC S-0626 / ISP 5235).